The sequence spans 150 residues: UPF0756 membrane protein ACICU_02320 (150 aa).

4 helical membrane-spanning segments follow: residues 1-21, 45-65, 83-103, and 115-135; these read MLAQ…CGLL, FFPY…TIGV, FISF…WLGG, and VVAG…GVPV.

Belongs to the UPF0756 family.

It localises to the cell membrane. The protein is UPF0756 membrane protein ACICU_02320 of Acinetobacter baumannii (strain ACICU).